The chain runs to 473 residues: O-methyltransferase ARMGADRAFT_1088206 (473 aa).

S-adenosyl-L-methionine-binding positions include 276–277, Asp-299, 330–331, and Arg-348; these read AG and DM. The Proton acceptor role is filled by His-352.

The protein belongs to the class I-like SAM-binding methyltransferase superfamily. Cation-independent O-methyltransferase family.

It functions in the pathway secondary metabolite biosynthesis. O-methyltransferase, part of the gene cluster that mediates the biosynthesis of melleolides, a range of antifungal and phytotoxic polyketide derivatives composed of an orsellinic acid (OA) moiety esterified to various sesquiterpene alcohols. The first step in melleolides biosynthesis is performed by the delta(6)-protoilludene synthase PRO1 which catalyzes the cyclization of farnesyl diphosphate to protoilludene. The orsellinic acid synthase armB produces OA by condensing acetyl-CoA with 3 malonyl-CoA units in a three-round chain elongation reaction folowed by a C2-C7 ring closure. ArmB further catalyzes the trans-esterification of OA to the various sesquiterpene alcohols resulting from the hydroxylation of protoilludene. The melleolides cluster also includes 5 cytochrome P450 monooxygenases, 4 NAD(+)-dependent oxidoreductases, one flavin-dependent oxidoreductase, and one O-methyltransferase. The cytochrome P450 monooxygenases may be involved in protoilludene hydroxylation to elaborate melleolides with multiple alcohol groups, such as melleolide D, which carries alcohol functionalities at C-4, C-5, C-10, and C-13. The role of the NAD(+)-dependent enzymes remains unknown. Numerous melleolides, including arnamial, show 5'-O-methylation of the aromatic moiety which may be catalyzed by the methyltransferase encoded in the cluster. The flavin-dependent oxidoreductase might represent the dehydrogenase yielding the aldehyde in position 1 of arnamial and other melleolides. Finally, several halogenase localized outside of the cluster, are able to catalyze the transfer of a single chlorine atom to the melleolide backbone, resulting in a 6'-chloromelleolide product. The polypeptide is O-methyltransferase ARMGADRAFT_1088206 (Armillaria gallica (Bulbous honey fungus)).